Here is a 4059-residue protein sequence, read N- to C-terminus: MMLAWLVSLLSMEVLLLAKPYSSFQFEPAEGSLAGGTWITVVFDGLDRSILYPNNGSQLQIDLVSVAIPTLRIPCDVSPAFVDLPVVTCQTRSLPSEADAGPYSLEMRSGEQVLGTPCPGSLDSCTFKFSKDQTPVLYQVYPASGVPGEVVSVYGRVITTWLETFDPDVDYIESPLILEAREDKWLTPCSLINRQTGSCFPIQEEHGLGNVQCRVEGDYIGSQNVSFSVFNKGRSMVHKEAWLISAKQELFLYQTYPEILSVFPKVGSLGGRTDIIITGDFFDPSARVTIAGIPCDIRYVSPRKIECTTRAPGNEARLTAPQAGNRGLRFEVGDATKDVELTEATPGYRWQIVPNASSPSGFWSKEGRPFRARLSGFFVAPQTNNYTFWIQADSQASLCFSSSEEPRTKVEVASVGVGTADWFDSWEQIGNEGSWHQKTTKLELQGGAKYYLEAEQHGIAPSRGMRIGVQIHNTWLNPDVVNTYLLEKHQIRARAQRLPEIQVLHVSGKGNFFLTWGNVSSQPVPANATAQQIQTTIEELLVVKCNLAPFSAHVLLRLGFEQGLEGSRSDGVRTSSTEPFCGRFSLGQLGHLILIPEAADKGYQLDRYPYLCLAYRGHMNKTLDMTVSFLFGFQTIMKNITCDWSLTDPHPESWQFTCINLWDTCLCHSEDIQSSLANTPLLAHRIDIRPVVPEAGLLYVDEIILADTNVTVSQADSGRACPGGNVVESVSVVGVPPVYSISSWLAGCGSELPLITACSVSTEGTGDGSELIEVTAQRLQRTSPPLGGHFFLYLSDTVIPDVPVRMSARQLHKLLQDSADESTSGYLNAGDFTVTEDLNSCYEHVWTLSWTTQTGDLPNFIRVSDQNLTGVNPTVTARVVYDGGVFLGPIFGDMLATANQQTQVAVQVNDIPAYCSGSCSFQYQQESTPSVDHVWYSLGSDVNLLVHFTGTGFPRDTQFLQVTVNKTSCEVLFSNETNVACELALLPVGVHQIFMLVIPSGLAVHASGEDLLLHVEPRLDAVEPSTAAEIGGRWVTLRGSSLEGVSLVLFGTQSCVIDAIRSNSQQIQCKVPPRGKDGYTVNVTVISGDHSTVLARAFTYVSSLNPVIVSLSRNRSSIAGGEILFLGMSLLVNYTDLDVQIHVQDTSAQVLSQTAWGLEVVLPPLVPGIHVISAFINGVSIRSQGVDLYIQYLTEVFSVEPCSGSLLGGTLLSLLGTGLGRDPALIRVLVDNHPCDIVNLTEVNIWCETPPAVLPPRADVLTVLASVEIWAGNTSFFHGPSLVGKGFTFTYEAAATPVVTAMWGEFRNNSVRFYVEGSNISDSVILLGSLKCELEVQFFGDSMNLSGCFFPLHSLEAGVYTLQVRHKRMGFANMSVVPQKFELSPQIIAIFPTHGSKCGGTVLTVKGMAFSSRKRSVHVDISGPFACMILSLEDHTVLCQTRFVGDQFSEASLALNITVLVNGLTSKCKGNCTLFIEEAATPIVDALTISISGSLTMVLMRGRRLATTADEPIAFVDDQLPCHTTFFNTSHVACQIRDLAPGFHYLSAVHTSAGYACLNSVSRNFFIVPQVLDYFPKDFSIHGGSLLTIKGTALRGWKATVVYVGRQACLTVNFSSDFIQCIVPAGNGSAALEIDVNGVLYHIGLVDYSSIFTPELLSVSRSQDILTFTVARISGAANVDIFIGTSPCLGVAGNRTVLQCMVPLLPAGEYLVTGYDHSRGWASSTLILVLRATVTSVTKNYGCLGGRLLHVLGAGFSPGNISAAVCGAPCQVLANATVSAFSCLVLPLHVSLAFLCDLRHAEDSCKVRSSTYLRCDLTVSMGTERLPGSWPYVYLCEESSLCLFEPDHWTESVFPSFSGLFLSPKVERDEVLIYNSSCNITMETEAEMECEMPNQPITAKITEIQKSWGQNTQGNFSFQFCRRWSRPHSWFPQRVPHDGDSVTVETGHLLLLDANTSFLNSLHIKGGKLIFMDPGPIELRAHSILITDGGELHIGSEEKPFQGKARIKIYGSVHSTPFFPYGVKFLAVRNGTLSLHGSVPEVTVTYLQAAAHAGDKVLTLGEAVDWKPGDEAVITSGMTVAGAEATEVVVVETVHNADLHLRNPLRYSYDFRENWVAGENPILKPTVALLSRNIIIQGNFTLERVKLLNSCQEANTAKGNLKHCLYSKSEKMLGARDLGARVIIQSFPEEPSFVKLKGVQFRDLGQAFHKHLSSLALVGAMRGSYIQSCSVWNSFSRGLSMHRTWGLKVDSNVFYKIVGHALLLGSYLDGRFSTSETVTGRKNGWWEQGSTIRNNVIISVSAAEGLSGSEMLAPAGIYTFSPTNVMEGNRVCAAGYGYVFHLVTSQTLQAPLLSFNWNTAHSCTRYGLLVYPKFQPPWNNDTGFTLFQNFMVWGSAGGAQIFRSNNLHLKNFQVYACRDFGIDILESDANTLITDSFLLGHFTHKGSLCMSAGIKTPQRWELTISNTTFVNFDGNCVAIRTCSGCFQGQGGYTVKTRQLKFVNSSNLVAFPFPHAAVLEDLDGSLSGKNGSHVLASMETLSDTCLTNASFSQIVPGSVCGEAVLFHRMSIALANSLDVPKNLTITDISNKTITVNYVEDTLSNYYGWMALLLDQETYSLQFESPWMNRSLQYSATFDSFAPGNYLLIMHRDLPPYPDILLRCGSQVGHSLPFHPLPSQDRACDWFFNRQLRQLTYLVSGEGQVKVFLQLKPGVPPSVSASTSVPESASRWSLPETWQDVEKGWGGYNHTIPGPGDDVLILPNKTVLVDTDLPVLRCLYVMGTLEFPVDRSNVLSVACLLIAGGELKVGTLENPLEKDQRLLIFLRASEEVVCDYFEGIHVDPGTIGVYGKLRLHSAYPKKSWVHLGADIAPGNERIIVHNAVDWQPHDTIVLSSSSYEAHEAEVLTVKEVKGHHIRIYERLKHRHIGSTHTMEDGQQVHLAAEVGLLTRNIRIQPDSSCRGRLLVGSFRKSSGEDFSGVLQLLNVEIQNMGLPLYSSIEFTGVSAGSWVISSTVHQSCSVGIHASSSHGVILTDNVVFGTNGHGIDVEGQNYSLTNNLVILTMQSANSSPWVAGIKVNYAEDIILHGNVVAGSERLGFHVGGHGCSSEVLWSDNVVHSSLHGLHLYKKHESNNCTGVSGFMAFKNFDYGAMVQTENSVDIQNITLVDNTVGLLAITYVSSALLSSVSTVQITLRNSVIVATSSSFDCIHDRKAPQSANWTSTDRAPSNPRGGRIGILWPVSASEPNAWPQEPWHKVRSRHSVPGIMKLQDVTFSSFVKSCYSNDLDVCILPNEYSTGVMYPITAERTRMLGIKDKNKFYFPVLQSSKDLVGTICPTLVCEYPRKYLFTDLDGRTLGLPPPVSVFPRTEEEWTGSFLNTGIFREEQKCTFRAMNQGFFCKQTEHAVLILDNVDATWTIPKSHPLVSVTNGFVDTFSIVKDSDLCPPTSSLSTFYSILPTRQMTKVCFPEQTPPFLRFLLLGNQRASKLILAVFYNEIQSPHVFLDKSFIPPTPLESAFSLLAEPSGANYFDIMNNLLYVVLQGEEPVEIHSSVSIHLALTVTFSVLEKGWERAMLESLSDFFQIDPNQIRLTLEMPGNKETLEAIANSERKRKRNCPSVTCGGPSIRYGQRRPLMAEMTSLKITPATTLETFSKVIVIEVGDLPNIRNSEPIQSLPSNRLQRLVNQVITAQQTGALENVLGMTVGALLVTQSKGVTGYRNASSLITGNLIYTRPSELSILVQPSDGEVGIELPVQPRLVFLDEKNERVESLGLPSEPWIISVSLEGASESVLKGCTLAETRDGYVTFSRLAVLISGSNWHLFFTVISPPGTNFTARSRTFVVLPVASKERSTIILALSLCSVASWVALSCLVCCWFKKSKTRKIKPEDISESQAKEQKKNTHNSSKPRGLQAKTAKENTLMGEDMRMKVMQGMQSQFPQHSMDGVSKRKVSRLAVTEERTTTPAPKIPRITCVPGSLAQQLTLQEPGNWQEAQQQLLRYQLAGRNQLLLLRPDLRQERKQGQEPSQLDKGSDCTGLSQEKATCIPTETFSLHTAPPETIQ.

Positions 1 to 18 (MMLAWLVSLLSMEVLLLA) are cleaved as a signal peptide. At 19–3851 (KPYSSFQFEP…LPVASKERST (3833 aa)) the chain is on the extracellular side. The IPT/TIG 1; atypical domain occupies 25 to 109 (QFEPAEGSLA…AGPYSLEMRS (85 aa)). Residues N55 and N224 are each glycosylated (N-linked (GlcNAc...) asparagine). IPT/TIG domains are found at residues 135-230 (PVLY…FSVF) and 257-333 (PEIL…FEVG). The PA14 domain occupies 323–483 (AGNRGLRFEV…TWLNPDVVNT (161 aa)). N-linked (GlcNAc...) asparagine glycans are attached at residues N355, N385, N518, N527, N620, N639, N709, N867, N965, N975, N1082, N1114, N1133, N1239, N1273, N1308, N1319, N1344, N1373, N1456, N1471, N1528, N1613, N1627, N1694, N1760, N1775, N1875, N1879, N1915, N1955, N2030, and N2139. IPT/TIG domains follow at residues 945 to 997 (LVHF…FMLV) and 1017 to 1100 (PRLD…AFTY). The IPT/TIG 6; atypical domain occupies 1106-1190 (PVIVSLSRNR…IRSQGVDLYI (85 aa)). Positions 1198-1266 (SVEPCSGSLL…RADVLTVLAS (69 aa)) constitute an IPT/TIG 7 domain. The IPT/TIG 8; atypical domain maps to 1297–1378 (PVVTAMWGEF…MGFANMSVVP (82 aa)). Residues 1385-1466 (PQIIAIFPTH…ITVLVNGLTS (82 aa)) enclose the IPT/TIG 9 domain. IPT/TIG domains lie at 1482–1566 (PIVD…RNFF) and 1569–1637 (PQVL…IDVN). Residues 1654–1738 (PELLSVSRSQ…VLRATVTSVT (85 aa)) enclose the IPT/TIG 12; atypical domain. A G8 1 domain is found at 1928–2049 (HSWFPQRVPH…PEVTVTYLQA (122 aa)). PbH1 repeat units lie at residues 2244-2266 (TWGLKVDSNVFYKIVGHALLLGS) and 2287-2321 (EQGSTIRNNVIISVSAAEGLSGSEMLAPAGIYTFS). N2380 carries an N-linked (GlcNAc...) asparagine glycan. 2 PbH1 repeats span residues 2404–2426 (SNNLHLKNFQVYACRDFGIDILE) and 2459–2481 (RWELTISNTTFVNFDGNCVAIRT). 9 N-linked (GlcNAc...) asparagine glycosylation sites follow: N2466, N2503, N2529, N2547, N2581, N2589, N2627, N2747, and N2762. The G8 2 domain maps to 2741–2867 (KGWGGYNHTI…PKKSWVHLGA (127 aa)). 2 PbH1 repeats span residues 3004-3026 (SAGSWVISSTVHQSCSVGIHASS) and 3027-3049 (SHGVILTDNVVFGTNGHGIDVEG). N3051 is a glycosylation site (N-linked (GlcNAc...) asparagine). The PbH1 7 repeat unit spans residues 3080–3102 (AEDIILHGNVVAGSERLGFHVGG). N-linked (GlcNAc...) asparagine glycans are attached at residues N3133 and N3162. The stretch at 3188 to 3212 (TVQITLRNSVIVATSSSFDCIHDRK) is one PbH1 8 repeat. 3 N-linked (GlcNAc...) asparagine glycosylation sites follow: N3218, N3719, and N3831. Residues 3852–3872 (IILALSLCSVASWVALSCLVC) traverse the membrane as a helical segment. The segment at 3869-3886 (CLVCCWFKKSKTRKIKPE) is ciliary targeting sequence (CST). The Cytoplasmic segment spans residues 3873–4059 (CWFKKSKTRK…LHTAPPETIQ (187 aa)). The segment covering 3885–3898 (PEDISESQAKEQKK) has biased composition (basic and acidic residues). The disordered stretch occupies residues 3885-3915 (PEDISESQAKEQKKNTHNSSKPRGLQAKTAK). The tract at residues 3946–3970 (KRKVSRLAVTEERTTTPAPKIPRIT) is nuclear localization signal (NLS). The tract at residues 4015–4038 (QERKQGQEPSQLDKGSDCTGLSQE) is disordered.

As to quaternary structure, interacts with CAMLG. Interacts with PKD2. Interacts (via CST) with ARF4; this interaction allows an efficient PKHD1 trafficking to the cilium. Interacts (via CST) with RAB8A; this interaction controls trafficking through the endomembrane systeme and to the cilium. Interacts (via CST) with TULP3; this interaction allows PKHD1 trafficking to the cilium. In terms of processing, palmitoylated. Palmitoylation facilitates the trafficking to the cilia and membrane targeting. Post-translationally, N-glycosylated. Several proteolytic cleavages occur within the extracellular domain, whereas at least one cleavage occurs within the cytoplasmic domain. Cleaved by a probable proprotein convertase which produces an extracellular domain (polyductin extracellular domain, (PECD)) and a C-terminal fragment (polyductin transmembrane fragment (PTM)) which are tethered together by disulfide bonds. This extracellular domain (PECD) is then shed from the primary cilium by activation of a member of the ADAM metalloproteinase disintegrins family, resulting in concomitant release of an intra-cellular C-terminal fragment (ICD) via a gamma-secretase-dependent process. The proteolytic cleavage of the C-terminal intracellular fragment (ICD) is controlled by cytosolic calcium concentration and activation of PKC. Expressed in bile ducts and distal nephron segments but is absent from the proximal tubule. Expressed in pancreas and kidney but also in the liver. Expressed primarily in the distal tubule and thick ascending limb of the loop of Henle, and at low-level in the proximal tubule before renal development is complete at P0.

Its subcellular location is the cell membrane. It localises to the cytoplasm. It is found in the apical cell membrane. The protein localises to the cytoskeleton. The protein resides in the cilium basal body. Its subcellular location is the cell projection. It localises to the cilium. It is found in the spindle. The protein localises to the chromosome. The protein resides in the centromere. Its subcellular location is the nucleus. It localises to the secreted. It is found in the extracellular exosome. The protein localises to the endoplasmic reticulum. The protein resides in the golgi apparatus. Promotes ciliogenesis in renal epithelial cells and therefore participates in the tubules formation and/or ensures the maintenance of the architecture of the lumen of the kidney. Has an impact on cellular symmetry by ensuring correct bipolar cell division through the regulation of centrosome duplication and mitotic spindle assembly and by maintaining oriented cell division (OCD) during tubular elongation through planar cell polarity (PCP) pathway. During epithelial cell morphogenesis, it also regulates cell-cell and cell-matrix adhesion and participates in cell motility. Promotes cell-cell contact through the positive regulation of PTK2 kinase activity leading to either positive regulation of epithelial cell proliferation through the HRAS/RAF1 pathways, or negative regulation of apoptosis through the PDK1/AKT1 pathway. May act in collecting-duct and biliary differentiation. May participate in the regulation of the cholangiocytes proliferation and the CCN2 production in an CXCL8-dependent manner. This is Fibrocystin from Mus musculus (Mouse).